The primary structure comprises 312 residues: Ornithine carbamoyltransferase (312 aa).

Carbamoyl phosphate contacts are provided by residues 60–63, Q87, R111, and 138–141; these read STRT and HPCQ. Residues N169, D229, and 233–234 contribute to the L-ornithine site; that span reads SM. Carbamoyl phosphate is bound by residues 268–269 and R296; that span reads CL.

Belongs to the aspartate/ornithine carbamoyltransferase superfamily. OTCase family.

The protein resides in the cytoplasm. The enzyme catalyses carbamoyl phosphate + L-ornithine = L-citrulline + phosphate + H(+). It functions in the pathway amino-acid biosynthesis; L-arginine biosynthesis; L-arginine from L-ornithine and carbamoyl phosphate: step 1/3. Functionally, reversibly catalyzes the transfer of the carbamoyl group from carbamoyl phosphate (CP) to the N(epsilon) atom of ornithine (ORN) to produce L-citrulline. The sequence is that of Ornithine carbamoyltransferase from Rhodopseudomonas palustris (strain BisA53).